The sequence spans 70 residues: Large ribosomal subunit protein eL38 (70 aa).

The protein belongs to the eukaryotic ribosomal protein eL38 family.

The protein is Large ribosomal subunit protein eL38 (RpL38) of Aedes aegypti (Yellowfever mosquito).